A 629-amino-acid polypeptide reads, in one-letter code: 5-aminolevulinate synthase, mitochondrial (629 aa).

Residues 1-69 constitute a mitochondrion transit peptide; the sequence is MDSVLRQSKA…VQSARTGGRA (69 aa). Positions 155, 268, and 287 each coordinate substrate. 3 residues coordinate pyridoxal 5'-phosphate: Ser320, His348, and Thr388. Residue Lys391 is part of the active site. Lys391 bears the N6-(pyridoxal phosphate)lysine mark. 2 residues coordinate pyridoxal 5'-phosphate: Thr420 and Thr421. Residue Thr506 participates in substrate binding.

This sequence belongs to the class-II pyridoxal-phosphate-dependent aminotransferase family. As to quaternary structure, homodimer. The cofactor is pyridoxal 5'-phosphate.

The protein resides in the mitochondrion matrix. It carries out the reaction succinyl-CoA + glycine + H(+) = 5-aminolevulinate + CO2 + CoA. It functions in the pathway porphyrin-containing compound metabolism; protoporphyrin-IX biosynthesis; 5-aminolevulinate from glycine: step 1/1. Functionally, catalyzes the synthesis of 5-aminolevulinate (ALA) from succinyl-CoA and glycine, the first and rate-limiting step in heme biosynthesis. The chain is 5-aminolevulinate synthase, mitochondrial (alv-1) from Neurospora crassa (strain ATCC 24698 / 74-OR23-1A / CBS 708.71 / DSM 1257 / FGSC 987).